The following is a 129-amino-acid chain: Lysozyme C (129 aa).

The 129-residue stretch at 1–129 (KVYGRCELAA…VHAWIRGCRL (129 aa)) folds into the C-type lysozyme domain. Disulfide bonds link Cys-6-Cys-127, Cys-30-Cys-115, Cys-64-Cys-80, and Cys-76-Cys-94. Catalysis depends on residues Glu-35 and Asp-52.

The protein belongs to the glycosyl hydrolase 22 family. In terms of assembly, monomer.

The protein localises to the secreted. It carries out the reaction Hydrolysis of (1-&gt;4)-beta-linkages between N-acetylmuramic acid and N-acetyl-D-glucosamine residues in a peptidoglycan and between N-acetyl-D-glucosamine residues in chitodextrins.. Lysozymes have primarily a bacteriolytic function; those in tissues and body fluids are associated with the monocyte-macrophage system and enhance the activity of immunoagents. This Tragopan temminckii (Temminck's tragopan) protein is Lysozyme C (LYZ).